A 674-amino-acid polypeptide reads, in one-letter code: DNA ligase (674 aa).

NAD(+) contacts are provided by residues 35 to 39 (DFEFD), 84 to 85 (SL), and glutamate 118. The active-site N6-AMP-lysine intermediate is the lysine 120. Residues arginine 141, glutamate 184, lysine 297, and lysine 321 each contribute to the NAD(+) site. Zn(2+)-binding residues include cysteine 415, cysteine 418, cysteine 433, and cysteine 439. Residues 598–674 (QVNRNFEGVT…VSEDEFEAML (77 aa)) form the BRCT domain.

This sequence belongs to the NAD-dependent DNA ligase family. LigA subfamily. Requires Mg(2+) as cofactor. Mn(2+) serves as cofactor.

It carries out the reaction NAD(+) + (deoxyribonucleotide)n-3'-hydroxyl + 5'-phospho-(deoxyribonucleotide)m = (deoxyribonucleotide)n+m + AMP + beta-nicotinamide D-nucleotide.. In terms of biological role, DNA ligase that catalyzes the formation of phosphodiester linkages between 5'-phosphoryl and 3'-hydroxyl groups in double-stranded DNA using NAD as a coenzyme and as the energy source for the reaction. It is essential for DNA replication and repair of damaged DNA. This chain is DNA ligase, found in Pelodictyon phaeoclathratiforme (strain DSM 5477 / BU-1).